A 266-amino-acid polypeptide reads, in one-letter code: Undecaprenyl-diphosphatase (266 aa).

8 consecutive transmembrane segments (helical) span residues 3–23, 41–61, 86–106, 108–128, 149–171, 184–204, 220–240, and 245–265; these read MSLLSIVLLGIVEGVTEFLPV, GTETFDIVIQLGAILAVVVLY, VLVGFLPSAVIGAVAYGAIKA, LNTPIIVAVALILGGIAILVI, FGVGLVQCLSMIPGVSRSGATIM, AEYSFFLAIPTMLGATTLALW, IGFVVSFIVAMLVIRWFLGVV, and FAPFAWYRIIAGTAALIWLLA.

The protein belongs to the UppP family.

The protein localises to the cell inner membrane. The enzyme catalyses di-trans,octa-cis-undecaprenyl diphosphate + H2O = di-trans,octa-cis-undecaprenyl phosphate + phosphate + H(+). Functionally, catalyzes the dephosphorylation of undecaprenyl diphosphate (UPP). Confers resistance to bacitracin. The chain is Undecaprenyl-diphosphatase from Rhizorhabdus wittichii (strain DSM 6014 / CCUG 31198 / JCM 15750 / NBRC 105917 / EY 4224 / RW1) (Sphingomonas wittichii).